Reading from the N-terminus, the 115-residue chain is MASSAVTKLALVVALCMAVSVAHAITCGQVTSSLAPCIGYVRSGGAVPPACCNGIRTINGLARTTADRQTACNCLKNLAGSISGVNPNNAAGLPGKCGVNVPYKISTSTNCATVK.

The first 24 residues, 1–24, serve as a signal peptide directing secretion; it reads MASSAVTKLALVVALCMAVSVAHA. 4 cysteine pairs are disulfide-bonded: C27-C74, C37-C51, C52-C97, and C72-C111.

It belongs to the plant LTP family.

Plant non-specific lipid-transfer proteins transfer phospholipids as well as galactolipids across membranes. May play a role in wax or cutin deposition in the cell walls of expanding epidermal cells and certain secretory tissues. The sequence is that of Non-specific lipid-transfer protein (MALD3) from Malus domestica (Apple).